We begin with the raw amino-acid sequence, 101 residues long: Large ribosomal subunit protein uL23 (101 aa).

This sequence belongs to the universal ribosomal protein uL23 family. In terms of assembly, part of the 50S ribosomal subunit. Contacts protein L29, and trigger factor when it is bound to the ribosome.

Functionally, one of the early assembly proteins it binds 23S rRNA. One of the proteins that surrounds the polypeptide exit tunnel on the outside of the ribosome. Forms the main docking site for trigger factor binding to the ribosome. In Synechocystis sp. (strain ATCC 27184 / PCC 6803 / Kazusa), this protein is Large ribosomal subunit protein uL23.